We begin with the raw amino-acid sequence, 185 residues long: MLTGAVARRYAQALLEIGIQTKTLDALEGELGRFVEMIGHPELQRFLFHPSIVVAEKKDLVGRLLATGAFSETARAFILLVIDRRRESYFADIFREFVRLANKVRNIEEARVTSAVELAPEQVERLRSQLAAATGKAIVLRMAVDPDLIGGLVVAFGDRIIDGSVAGKIRDLRESLLRSPLPSLS.

Belongs to the ATPase delta chain family. In terms of assembly, F-type ATPases have 2 components, F(1) - the catalytic core - and F(0) - the membrane proton channel. F(1) has five subunits: alpha(3), beta(3), gamma(1), delta(1), epsilon(1). CF(0) has four main subunits: a(1), b(2) and c(10-14). The alpha and beta chains form an alternating ring which encloses part of the gamma chain. F(1) is attached to F(0) by a central stalk formed by the gamma and epsilon chains, while a peripheral stalk is formed by the delta and b chains.

It is found in the cell membrane. Its function is as follows. F(1)F(0) ATP synthase produces ATP from ADP in the presence of a proton or sodium gradient. F-type ATPases consist of two structural domains, F(1) containing the extramembraneous catalytic core and F(0) containing the membrane proton channel, linked together by a central stalk and a peripheral stalk. During catalysis, ATP synthesis in the catalytic domain of F(1) is coupled via a rotary mechanism of the central stalk subunits to proton translocation. This protein is part of the stalk that links CF(0) to CF(1). It either transmits conformational changes from CF(0) to CF(1) or is implicated in proton conduction. The protein is ATP synthase subunit delta of Heliobacterium modesticaldum (strain ATCC 51547 / Ice1).